The sequence spans 238 residues: 2-C-methyl-D-erythritol 4-phosphate cytidylyltransferase (238 aa).

The protein belongs to the IspD/TarI cytidylyltransferase family. IspD subfamily.

It carries out the reaction 2-C-methyl-D-erythritol 4-phosphate + CTP + H(+) = 4-CDP-2-C-methyl-D-erythritol + diphosphate. It participates in isoprenoid biosynthesis; isopentenyl diphosphate biosynthesis via DXP pathway; isopentenyl diphosphate from 1-deoxy-D-xylulose 5-phosphate: step 2/6. Catalyzes the formation of 4-diphosphocytidyl-2-C-methyl-D-erythritol from CTP and 2-C-methyl-D-erythritol 4-phosphate (MEP). This is 2-C-methyl-D-erythritol 4-phosphate cytidylyltransferase from Acinetobacter baumannii (strain ATCC 17978 / DSM 105126 / CIP 53.77 / LMG 1025 / NCDC KC755 / 5377).